The chain runs to 327 residues: Putative HTH-type transcriptional regulatory protein Mevan_1514 (327 aa).

The HTH cro/C1-type domain occupies 128–189 (LKETREKLNI…IKGINITDYF (62 aa)). A DNA-binding region (H-T-H motif) is located at residues 139–158 (VGELAEFSRVSRKTIYKYEQ).

The chain is Putative HTH-type transcriptional regulatory protein Mevan_1514 from Methanococcus vannielii (strain ATCC 35089 / DSM 1224 / JCM 13029 / OCM 148 / SB).